A 233-amino-acid chain; its full sequence is Probable septum site-determining protein MinC (233 aa).

A disordered region spans residues 98–123 (LTEGKEKAPRPAPSEPTPPPPPVANQ). Over residues 107 to 120 (RPAPSEPTPPPPPV) the composition is skewed to pro residues.

The protein belongs to the MinC family. In terms of assembly, interacts with MinD and FtsZ.

Cell division inhibitor that blocks the formation of polar Z ring septums. Rapidly oscillates between the poles of the cell to destabilize FtsZ filaments that have formed before they mature into polar Z rings. Prevents FtsZ polymerization. The sequence is that of Probable septum site-determining protein MinC from Klebsiella pneumoniae (strain 342).